A 215-amino-acid chain; its full sequence is MPAFNRLFPLASLVLIYWVSVCFPVCVEVPSETEAVQGNPMKLRCISCMKREEVEATTVVEWFYRPEGGKDFLIYEYRNGHQEVESPFQGRLQWNGSKDLQDVSITVLNVTLNDSGLYTCNVSREFEFEAHRPFVKTTRLIPLRVTEEAGEDFTSVVSEIMMYILLVFLTLWLLIEMIYCYRKVSKAEEAAQENASDYLAIPSENKENSAVPVEE.

The first 22 residues, 1-22, serve as a signal peptide directing secretion; it reads MPAFNRLFPLASLVLIYWVSVC. Over 23 to 156 the chain is Extracellular; that stretch reads FPVCVEVPSE…EEAGEDFTSV (134 aa). Cystine bridges form between Cys26–Cys48 and Cys45–Cys120. The Ig-like C2-type domain occupies 32 to 154; the sequence is ETEAVQGNPM…VTEEAGEDFT (123 aa). Asn95, Asn109, Asn113, and Asn121 each carry an N-linked (GlcNAc...) asparagine glycan. A helical membrane pass occupies residues 157 to 178; sequence VSEIMMYILLVFLTLWLLIEMI. The Cytoplasmic portion of the chain corresponds to 179 to 215; that stretch reads YCYRKVSKAEEAAQENASDYLAIPSENKENSAVPVEE.

The protein belongs to the sodium channel auxiliary subunit SCN3B (TC 8.A.17) family. A voltage-gated sodium (Nav) channel consists of an ion-conducting pore-forming alpha subunit functional on its own that is regulated by one or more beta subunits. Forms homodimers and homotrimers. SCN3B is non-covalently associated with alpha subunits and induces the formation of alpha subunit oligomers, including trimers. Interacts with SCN5A/Nav1.5; regulatory subunit of SCN5A/Nav1.5. Interacts with SCN7A/Nav2.1; probable regulatory subunit of SCN7A/Nav2.1. Interacts with SCN10A; regulatory subunit of SCN10A/Nav1.8. Interacts with NFASC; probably involved in targeting the sodium channels to the nodes of Ranvier. Intramolecular disulfide bonds favor the voltage-gated sodium channel oligomeric complex assembly. In terms of processing, N-glycosylated. In terms of tissue distribution, expressed in the atrium.

The protein localises to the cell membrane. In terms of biological role, regulatory subunit of multiple voltage-gated sodium (Nav) channels directly mediating the depolarization of excitable membranes. Navs, also called VGSCs (voltage-gated sodium channels) or VDSCs (voltage-dependent sodium channels), operate by switching between closed and open conformations depending on the voltage difference across the membrane. In the open conformation they allow Na(+) ions to selectively pass through the pore, along their electrochemical gradient. The influx of Na+ ions provokes membrane depolarization, initiating the propagation of electrical signals throughout cells and tissues. The accessory beta subunits participate in localization and functional modulation of the Nav channels. Modulates the activity of SCN2A/Nav1.2, causing a hyperpolarizing shift in the voltage-dependence of inactivation of the channel and increasing the fraction of channels operating in the fast gating mode. Modulates the activity of SCN5A/Nav1.5. Could also regulate the atypical sodium channel SCN7A/Nav2.1. Modulates the activity of SCN10A/Nav1.8, regulating its oligomerization and accelerating the recovery from inactivation. This chain is Sodium channel regulatory subunit beta-3, found in Homo sapiens (Human).